The following is a 598-amino-acid chain: Elongation factor 4 (598 aa).

Residues 4 to 186 enclose the tr-type G domain; that stretch reads DHIRNFSIIA…AIVKRVPPPK (183 aa). GTP-binding positions include 16-21 and 133-136; these read DHGKST and NKID.

This sequence belongs to the TRAFAC class translation factor GTPase superfamily. Classic translation factor GTPase family. LepA subfamily.

It localises to the cell inner membrane. It carries out the reaction GTP + H2O = GDP + phosphate + H(+). Required for accurate and efficient protein synthesis under certain stress conditions. May act as a fidelity factor of the translation reaction, by catalyzing a one-codon backward translocation of tRNAs on improperly translocated ribosomes. Back-translocation proceeds from a post-translocation (POST) complex to a pre-translocation (PRE) complex, thus giving elongation factor G a second chance to translocate the tRNAs correctly. Binds to ribosomes in a GTP-dependent manner. The sequence is that of Elongation factor 4 from Magnetococcus marinus (strain ATCC BAA-1437 / JCM 17883 / MC-1).